The primary structure comprises 583 residues: Putative fatty-acid--CoA ligase fadD25 (583 aa).

Transmembrane regions (helical) follow at residues 77-97 (YVVS…LSIP), 109-129 (VFAD…DNVV), and 229-249 (FVLG…TSPI). The disordered stretch occupies residues 353-375 (IVQFDPQKLPDGQAERTESDGGT).

The protein belongs to the ATP-dependent AMP-binding enzyme family.

It localises to the cell membrane. The chain is Putative fatty-acid--CoA ligase fadD25 (fadD25) from Mycobacterium tuberculosis (strain CDC 1551 / Oshkosh).